The primary structure comprises 140 residues: MMEFKVSPLTKIISLSGFLALGFLLVILSCALFHNYYPLFDILIFLLAPIPNTIFNAGNKYHTSDFMSDSSNTGQDLAHFLTGMLVTSGIALPVVFYHCQLIGHLSCIMCMIGGLIIYSSIVIFKWFFKKDFNEDDSLFG.

The Cytoplasmic segment spans residues 1-11 (MMEFKVSPLTK). A helical transmembrane segment spans residues 12–32 (IISLSGFLALGFLLVILSCAL). Residues 33 to 37 (FHNYY) lie on the Lumenal side of the membrane. The chain crosses the membrane as a helical span at residues 38–58 (PLFDILIFLLAPIPNTIFNAG). Over 59-76 (NKYHTSDFMSDSSNTGQD) the chain is Cytoplasmic. A helical transmembrane segment spans residues 77–97 (LAHFLTGMLVTSGIALPVVFY). The Lumenal portion of the chain corresponds to 98–107 (HCQLIGHLSC). Residues 108 to 128 (IMCMIGGLIIYSSIVIFKWFF) traverse the membrane as a helical segment. Residues 129–140 (KKDFNEDDSLFG) are Cytoplasmic-facing. Position 137 is a phosphoserine (Ser-137).

This sequence belongs to the OB-RGRP/VPS55 family.

It is found in the endosome membrane. Functionally, involved in protein transport from endosomes to the vacuole. The chain is Vacuolar protein sorting-associated protein 55 (VPS55) from Saccharomyces cerevisiae (strain ATCC 204508 / S288c) (Baker's yeast).